The primary structure comprises 126 residues: Aspartate 1-decarboxylase (126 aa).

Residue serine 25 is the Schiff-base intermediate with substrate; via pyruvic acid of the active site. Residue serine 25 is modified to Pyruvic acid (Ser). Threonine 57 is a substrate binding site. The active-site Proton donor is the tyrosine 58. Glycine 73–alanine 75 lines the substrate pocket.

This sequence belongs to the PanD family. As to quaternary structure, heterooctamer of four alpha and four beta subunits. Requires pyruvate as cofactor. Post-translationally, is synthesized initially as an inactive proenzyme, which is activated by self-cleavage at a specific serine bond to produce a beta-subunit with a hydroxyl group at its C-terminus and an alpha-subunit with a pyruvoyl group at its N-terminus.

It localises to the cytoplasm. It catalyses the reaction L-aspartate + H(+) = beta-alanine + CO2. It participates in cofactor biosynthesis; (R)-pantothenate biosynthesis; beta-alanine from L-aspartate: step 1/1. Its function is as follows. Catalyzes the pyruvoyl-dependent decarboxylation of aspartate to produce beta-alanine. In Halorhodospira halophila (strain DSM 244 / SL1) (Ectothiorhodospira halophila (strain DSM 244 / SL1)), this protein is Aspartate 1-decarboxylase.